Consider the following 195-residue polypeptide: UDP-N-acetylbacillosamine N-acetyltransferase (195 aa).

Substrate-binding positions include serine 13–histidine 15, aspartate 35–aspartate 36, and glycine 56. Histidine 125 functions as the Proton acceptor in the catalytic mechanism. Positions 134, 155, and 173 each coordinate acetyl-CoA.

This sequence belongs to the transferase hexapeptide repeat family. Homotrimer.

It catalyses the reaction UDP-N-acetylbacillosamine + acetyl-CoA = UDP-N,N'-diacetylbacillosamine + CoA + H(+). The protein operates within protein modification; protein glycosylation. Its function is as follows. Acetyltransferase that modifies the UDP-4-amino-sugar to form UDP-N,N'-diacetylbacillosamine in the N-linked protein glycosylation pathway. The sequence is that of UDP-N-acetylbacillosamine N-acetyltransferase (pglD) from Campylobacter jejuni subsp. jejuni serotype O:2 (strain ATCC 700819 / NCTC 11168).